The primary structure comprises 441 residues: MAGUK p55 subfamily member 4 (441 aa).

The 84-residue stretch at 1 to 84 (MRTVCLVKNQ…TIMFKVIPVS (84 aa)) folds into the PDZ domain. The 71-residue stretch at 91 to 161 (QTTVYVRAMI…PSNHLLKRKQ (71 aa)) folds into the SH3 domain. The Guanylate kinase-like domain maps to 232–421 (HRLIVLVGPS…ARAQLLSAIQ (190 aa)). A coiled-coil region spans residues 373-430 (VDMKFKDEDLQEMEELAQKMESQFGQFFDHVIVNDNLQDARAQLLSAIQKAEEELQWV).

The protein belongs to the MAGUK family. Interacts with MPDZ. May interact with GRIA2. Forms a complex with CRB1 and PALS1. Interacts with FASLG. Highly expressed in brain and detected in lung, and bone (at protein level). Also expressed in intestine and spleen.

Its subcellular location is the cytoplasm. In terms of biological role, may play a role in retinal photoreceptors development. The sequence is that of MAGUK p55 subfamily member 4 (Mpp4) from Rattus norvegicus (Rat).